The sequence spans 80 residues: Cytochrome c oxidase subunit 7A1, mitochondrial (80 aa).

The transit peptide at 1 to 21 (MRALRVSQALVRSFSSTARNR) directs the protein to the mitochondrion. The Mitochondrial matrix segment spans residues 22–46 (LENRVAEKQKIFQADNDLPVHLKGG). Residues 47–75 (ATDNILYRVTMTLCLGGTVYSLYCLGWAS) traverse the membrane as a helical segment. Residues 76–80 (FPHKK) are Mitochondrial intermembrane-facing.

It belongs to the cytochrome c oxidase VIIa family. In terms of assembly, component of the complex IV (CIV, cytochrome c oxidase), a multisubunit enzyme composed of 14 subunits. The complex is composed of a catalytic core of 3 subunits MT-CO1, MT-CO2 and MT-CO3, encoded in the mitochondrial DNA, and 11 supernumerary subunits COX4I1 (or COX4I2), COX5A, COX5B, COX6A2 (or COX6A1), COX6B1 (or COX6B2), COX6C, COX7A1 (or COX7A2), COX7B, COX7C, COX8B and NDUFA4, which are encoded in the nuclear genome. The complex exists as a monomer or a dimer and forms supercomplexes (SCs) in the inner mitochondrial membrane with NADH-ubiquinone oxidoreductase (complex I, CI) and ubiquinol-cytochrome c oxidoreductase (cytochrome b-c1 complex, complex III, CIII), resulting in different assemblies (supercomplex SCI(1)III(2)IV(1) and megacomplex MCI(2)III(2)IV(2)).

It localises to the mitochondrion inner membrane. The protein operates within energy metabolism; oxidative phosphorylation. Its function is as follows. Component of the mitochondrial respiratory complex IV (CIV, also named cytochrome c oxidase complex), the last enzyme in the mitochondrial electron transport chain which drives oxidative phosphorylation. The CIV complex is the component of the respiratory chain that catalyzes the reduction of oxygen to water. Acts as an assembly factor that specifically drives the homodimerization of CIV complexes, mediating the formation of mitochondrial respiratory supercomplexes (respirasomes) containing two CIV: supercomplxes with two molecules of CIV show improved activity. Despite being highly expressed in brown adipose tissue, not required for thermogenesis. The polypeptide is Cytochrome c oxidase subunit 7A1, mitochondrial (COX7A1) (Sus scrofa (Pig)).